Reading from the N-terminus, the 223-residue chain is Holliday junction branch migration complex subunit RuvA (223 aa).

Residues 1–64 (MIGKLTGRLD…EDLLQLFGFL (64 aa)) form a domain I region. The domain II stretch occupies residues 65-143 (SPYEKEWHRL…AVMAMGGTLD (79 aa)). Residues 144 to 171 (DAMDDVVDDMPGESAAPAPAPQPRAPKR) are flexible linker. The interval 148 to 177 (DVVDDMPGESAAPAPAPQPRAPKRPASNAQ) is disordered. The tract at residues 172-223 (PASNAQAEALSALQNLGYGPSDAAQAVAQAAESASNTPELIRAALRLLAPKE) is domain III.

This sequence belongs to the RuvA family. As to quaternary structure, homotetramer. Forms an RuvA(8)-RuvB(12)-Holliday junction (HJ) complex. HJ DNA is sandwiched between 2 RuvA tetramers; dsDNA enters through RuvA and exits via RuvB. An RuvB hexamer assembles on each DNA strand where it exits the tetramer. Each RuvB hexamer is contacted by two RuvA subunits (via domain III) on 2 adjacent RuvB subunits; this complex drives branch migration. In the full resolvosome a probable DNA-RuvA(4)-RuvB(12)-RuvC(2) complex forms which resolves the HJ.

The protein resides in the cytoplasm. The RuvA-RuvB-RuvC complex processes Holliday junction (HJ) DNA during genetic recombination and DNA repair, while the RuvA-RuvB complex plays an important role in the rescue of blocked DNA replication forks via replication fork reversal (RFR). RuvA specifically binds to HJ cruciform DNA, conferring on it an open structure. The RuvB hexamer acts as an ATP-dependent pump, pulling dsDNA into and through the RuvAB complex. HJ branch migration allows RuvC to scan DNA until it finds its consensus sequence, where it cleaves and resolves the cruciform DNA. The sequence is that of Holliday junction branch migration complex subunit RuvA from Jannaschia sp. (strain CCS1).